Here is a 201-residue protein sequence, read N- to C-terminus: FMN-dependent NADH:quinone oxidoreductase (201 aa).

FMN is bound by residues S10, 16 to 18 (SQS), 96 to 99 (MYNF), and 140 to 143 (SRGG).

It belongs to the azoreductase type 1 family. In terms of assembly, homodimer. It depends on FMN as a cofactor.

The enzyme catalyses 2 a quinone + NADH + H(+) = 2 a 1,4-benzosemiquinone + NAD(+). It carries out the reaction N,N-dimethyl-1,4-phenylenediamine + anthranilate + 2 NAD(+) = 2-(4-dimethylaminophenyl)diazenylbenzoate + 2 NADH + 2 H(+). Quinone reductase that provides resistance to thiol-specific stress caused by electrophilic quinones. Functionally, also exhibits azoreductase activity. Catalyzes the reductive cleavage of the azo bond in aromatic azo compounds to the corresponding amines. The protein is FMN-dependent NADH:quinone oxidoreductase of Shigella boydii serotype 4 (strain Sb227).